A 415-amino-acid chain; its full sequence is uncharacterized protein (415 aa).

Helical transmembrane passes span 20-40 (MAYL…FGIL), 43-63 (LMPI…PAIA), 78-98 (IPIL…TPYI), 109-129 (LPNI…VIAF), 155-175 (VILV…LSIS), 243-263 (IVIM…SSLI), 300-320 (IFSS…LIAF), 328-348 (GILC…YTLI), 360-380 (ISFY…LILV), and 388-408 (GSLA…FAIL).

The protein belongs to the polysaccharide synthase family.

It localises to the cell membrane. This is an uncharacterized protein from Methanocaldococcus jannaschii (strain ATCC 43067 / DSM 2661 / JAL-1 / JCM 10045 / NBRC 100440) (Methanococcus jannaschii).